We begin with the raw amino-acid sequence, 489 residues long: Pluviatolide synthase (489 aa).

Residues 6-26 traverse the membrane as a helical segment; sequence SVLAMSSTLILALAMALIFLF. Cys432 provides a ligand contact to heme.

The protein belongs to the cytochrome P450 family. Requires heme as cofactor. Expressed in leaves, rhizomes and stems.

The protein resides in the membrane. The enzyme catalyses (-)-matairesinol + reduced [NADPH--hemoprotein reductase] + O2 = (-)-pluviatolide + oxidized [NADPH--hemoprotein reductase] + 2 H2O + H(+). It functions in the pathway aromatic compound metabolism; phenylpropanoid biosynthesis. In terms of biological role, cytochrome P450 involved in the biosynthesis of etoposide, a chemotherapeutic compound of the topoisomerase inhibitor family. Catalyzes the conversion of matairesinol to pluviatolide. This Sinopodophyllum hexandrum (Himalayan may apple) protein is Pluviatolide synthase.